A 44-amino-acid polypeptide reads, in one-letter code: Photosystem I reaction center subunit IX (44 aa).

A helical membrane pass occupies residues 7 to 27; the sequence is YLSVAPVLSTLSLGFLTGFLI.

Belongs to the PsaJ family.

The protein localises to the plastid membrane. Functionally, may help in the organization of the PsaE and PsaF subunits. This is Photosystem I reaction center subunit IX from Cuscuta gronovii (Common dodder).